Here is a 305-residue protein sequence, read N- to C-terminus: Ribonuclease BN (305 aa).

Positions 64, 66, 68, 69, 141, 212, and 270 each coordinate Zn(2+). The active-site Proton acceptor is the Asp-68.

This sequence belongs to the RNase Z family. RNase BN subfamily. Homodimer. It depends on Zn(2+) as a cofactor.

Functionally, zinc phosphodiesterase, which has both exoribonuclease and endoribonuclease activities. The chain is Ribonuclease BN from Salmonella paratyphi C (strain RKS4594).